Reading from the N-terminus, the 148-residue chain is DNA-directed RNA polymerase II subunit GRINL1A, isoforms 4/5 (148 aa).

The disordered stretch occupies residues 1–66; the sequence is MATPARAPES…AEFGGAAGNV (66 aa). Residues 53 to 66 show a composition bias toward low complexity; the sequence is GLGAAEFGGAAGNV.

The protein is DNA-directed RNA polymerase II subunit GRINL1A, isoforms 4/5 (POLR2M) of Homo sapiens (Human).